The chain runs to 158 residues: UPF0329 protein ECU06_0050 (158 aa).

This sequence belongs to the UPF0329 family.

In Encephalitozoon cuniculi (strain GB-M1) (Microsporidian parasite), this protein is UPF0329 protein ECU06_0050.